Reading from the N-terminus, the 175-residue chain is uncharacterized protein (175 aa).

A coiled-coil region spans residues 107-138 (KTEEEAEKTLQEIERKIFKKLWENLDKERKRE).

This is an uncharacterized protein from Aquifex aeolicus (strain VF5).